The primary structure comprises 326 residues: UDP-N-acetylglucosamine transporter (326 aa).

Helical transmembrane passes span 8–24 (LSLG…VLTM), 42–58 (AVVV…ILLV), 138–154 (VYQW…VAFV), 174–190 (FVGL…SGFA), 210–226 (IQLG…GVYI), 247–263 (IVVI…AAVI), 269–285 (ILKG…STLI), and 296–312 (TSVF…ATFL).

The protein belongs to the nucleotide-sugar transporter family. SLC35A subfamily. In terms of assembly, interacts with SLC35A2; the interaction is reduced in the presence of SLC35A4. Found in a complex with SLC35A2 and SLC35A4.

It is found in the golgi apparatus membrane. Its function is as follows. Uridine diphosphate-N-acetylglucosamine (UDP-GlcNAc) transporter in the Golgi apparatus. May supply UDP-GlcNAc as substrate for Golgi-resident glycosyltransferases that generate branching of diantennary oligosaccharides. The sequence is that of UDP-N-acetylglucosamine transporter (SLC35A3) from Canis lupus familiaris (Dog).